The sequence spans 138 residues: U1 small nuclear ribonucleoprotein C (138 aa).

The Matrin-type zinc-finger motif lies at 4 to 36; the sequence is FYCDYCDTYLTHDSPSVRKTHCSGRKHKENVRD. At Y8 the chain carries Phosphotyrosine. The residue at position 17 (S17) is a Phosphoserine. K52 bears the N6-acetyllysine mark. Residues 62 to 99 are disordered; it reads IPPNLFSAPPLGGPMIPPPHPSMMGPPPPGMMPVGPPP. The span at 72–99 shows a compositional bias: pro residues; it reads LGGPMIPPPHPSMMGPPPPGMMPVGPPP.

The protein belongs to the U1 small nuclear ribonucleoprotein C family. As to quaternary structure, component of the U1 snRNP. The U1 snRNP is composed of the U1 snRNA and the 7 core Sm proteins SNRPB, SNRPD1, SNRPD2, SNRPD3, SNRPE, SNRPF and SNRPG that assemble in a heptameric protein ring on the Sm site of the small nuclear RNA to form the core snRNP, and at least 3 U1 snRNP-specific proteins SNRNP70/U1-70K, SNRPA/U1-A and SNRPC/U1-C. SNRPC/U1-C interacts with U1 snRNA and the 5' splice-site region of the pre-mRNA. Interacts (via N-terminus) with TIA1 (via C-terminus); thereby promoting spliceosomal U1 snRNP recruitment to 5' splice sites.

The protein resides in the nucleus. Functionally, component of the spliceosomal U1 snRNP, which is essential for recognition of the pre-mRNA 5' splice-site and the subsequent assembly of the spliceosome. SNRPC/U1-C is directly involved in initial 5' splice-site recognition for both constitutive and regulated alternative splicing. The interaction with the 5' splice-site seems to precede base-pairing between the pre-mRNA and the U1 snRNA. Stimulates commitment or early (E) complex formation by stabilizing the base pairing of the 5' end of the U1 snRNA and the 5' splice-site region. The protein is U1 small nuclear ribonucleoprotein C of Monodelphis domestica (Gray short-tailed opossum).